The sequence spans 85 residues: MKTVFAILFLAFIALTYARSYEDVKEEIKNEIEKEILEDLEEESDELNDKSKEINDAKPWRWVRRIRWRKLVPYIPAVVAAAGKK.

A signal peptide spans 1–18; the sequence is MKTVFAILFLAFIALTYA. A propeptide spanning residues 19–57 is cleaved from the precursor; that stretch reads RSYEDVKEEIKNEIEKEILEDLEEESDELNDKSKEINDA. Ala-82 is modified (alanine amide).

It belongs to the arminin family. Expressed in entodermal epithelium along the body column.

It is found in the secreted. The protein resides in the target cell membrane. Antimicrobial peptide with a broad-spectrum antimicrobial activity. Keeps its antibacterial activity under a wide range of salt concentrations that mimic physiological conditions of human blood, which is surprising, since Hydra is an obligate freshwater animal with nearly no salt tolerance. Does not affect red blood cells. This Hydra vulgaris (Hydra) protein is Arminin 2b.